Consider the following 388-residue polypeptide: Methylthioribose-1-phosphate isomerase (388 aa).

The Proton donor role is filled by Asp253.

The protein belongs to the eIF-2B alpha/beta/delta subunits family. MtnA subfamily.

Its subcellular location is the cytoplasm. The protein resides in the nucleus. It catalyses the reaction 5-(methylsulfanyl)-alpha-D-ribose 1-phosphate = 5-(methylsulfanyl)-D-ribulose 1-phosphate. It participates in amino-acid biosynthesis; L-methionine biosynthesis via salvage pathway; L-methionine from S-methyl-5-thio-alpha-D-ribose 1-phosphate: step 1/6. Catalyzes the interconversion of methylthioribose-1-phosphate (MTR-1-P) into methylthioribulose-1-phosphate (MTRu-1-P). This chain is Methylthioribose-1-phosphate isomerase, found in Fusarium vanettenii (strain ATCC MYA-4622 / CBS 123669 / FGSC 9596 / NRRL 45880 / 77-13-4) (Fusarium solani subsp. pisi).